Reading from the N-terminus, the 546-residue chain is Probable protein kinase UbiB (546 aa).

Residues 124–502 (DFDIKPLASA…HVRQGQSRYL (379 aa)) enclose the Protein kinase domain. Residues 130–138 (LASASIAQV) and lysine 153 each bind ATP. The active-site Proton acceptor is aspartate 288. 2 helical membrane passes run 501-521 (YLLG…VSRP) and 522-542 (EWGL…FVGW).

It belongs to the ABC1 family. UbiB subfamily.

The protein localises to the cell inner membrane. Its pathway is cofactor biosynthesis; ubiquinone biosynthesis [regulation]. In terms of biological role, is probably a protein kinase regulator of UbiI activity which is involved in aerobic coenzyme Q (ubiquinone) biosynthesis. The chain is Probable protein kinase UbiB from Escherichia fergusonii (strain ATCC 35469 / DSM 13698 / CCUG 18766 / IAM 14443 / JCM 21226 / LMG 7866 / NBRC 102419 / NCTC 12128 / CDC 0568-73).